The primary structure comprises 674 residues: U-box domain-containing protein 16 (674 aa).

The 75-residue stretch at 273–347 folds into the U-box domain; the sequence is NIPADFRCPI…VLWCRDQKIP (75 aa). 3 ARM repeats span residues 399–438, 441–481, and 484–523; these read TVAR…NLSI, QNKT…SLAG, and AYRR…NLVA.

The enzyme catalyses S-ubiquitinyl-[E2 ubiquitin-conjugating enzyme]-L-cysteine + [acceptor protein]-L-lysine = [E2 ubiquitin-conjugating enzyme]-L-cysteine + N(6)-ubiquitinyl-[acceptor protein]-L-lysine.. It participates in protein modification; protein ubiquitination. In terms of biological role, functions as an E3 ubiquitin ligase. The sequence is that of U-box domain-containing protein 16 (PUB16) from Arabidopsis thaliana (Mouse-ear cress).